Reading from the N-terminus, the 234-residue chain is Phosphoribosylaminoimidazole-succinocarboxamide synthase (234 aa).

This sequence belongs to the SAICAR synthetase family.

The catalysed reaction is 5-amino-1-(5-phospho-D-ribosyl)imidazole-4-carboxylate + L-aspartate + ATP = (2S)-2-[5-amino-1-(5-phospho-beta-D-ribosyl)imidazole-4-carboxamido]succinate + ADP + phosphate + 2 H(+). It participates in purine metabolism; IMP biosynthesis via de novo pathway; 5-amino-1-(5-phospho-D-ribosyl)imidazole-4-carboxamide from 5-amino-1-(5-phospho-D-ribosyl)imidazole-4-carboxylate: step 1/2. This Clostridium botulinum (strain Langeland / NCTC 10281 / Type F) protein is Phosphoribosylaminoimidazole-succinocarboxamide synthase.